A 134-amino-acid polypeptide reads, in one-letter code: ATP synthase epsilon chain (134 aa).

This sequence belongs to the ATPase epsilon chain family. F-type ATPases have 2 components, CF(1) - the catalytic core - and CF(0) - the membrane proton channel. CF(1) has five subunits: alpha(3), beta(3), gamma(1), delta(1), epsilon(1). CF(0) has three main subunits: a, b and c.

It is found in the cell inner membrane. Functionally, produces ATP from ADP in the presence of a proton gradient across the membrane. In Sinorhizobium medicae (strain WSM419) (Ensifer medicae), this protein is ATP synthase epsilon chain.